Reading from the N-terminus, the 259-residue chain is MASQGPLVIAMRLRNQLQSVYKMDPLRNEEVVKVKIKELNEHIVCYLCAGYFIDATTITECLHTFCKSCIVKYLQTSKYCPLCNIKIHETQPLLNLKLDRVMQDIVYKLVPGLQENEDSRIRDFYHSRGLERVLQPSAVEDSVGDVSQLSLSLAVSQKTSHYYRNDEHVCLCLEKVSSGKDKKKFILQQKYVRCSVRSEIRHLRRVLSHRLSAPLAQVQLLIDNKVLPDHMTMKQLWLMHWYGKPAPLVLLYSVKEKRR.

An RING-type zinc finger spans residues 45 to 84 (CYLCAGYFIDATTITECLHTFCKSCIVKYLQTSKYCPLCN).

In terms of assembly, component of a PRC1-like complex.

The protein localises to the nucleus. Functionally, component of a Polycomb group (PcG) multiprotein PRC1-like complex, a complex class required to maintain the transcriptionally repressive state of many genes, including Hox genes, throughout development. PcG PRC1 complex acts via chromatin remodeling and modification of histones; it mediates monoubiquitination of histone H2A 'Lys-119', rendering chromatin heritably changed in its expressibility. This chain is Polycomb group RING finger protein 1 (pcgf1), found in Xenopus laevis (African clawed frog).